A 99-amino-acid chain; its full sequence is Putative regulatory protein Kole_1849 (99 aa).

This sequence belongs to the RemA family.

This chain is Putative regulatory protein Kole_1849, found in Kosmotoga olearia (strain ATCC BAA-1733 / DSM 21960 / TBF 19.5.1).